A 408-amino-acid polypeptide reads, in one-letter code: NADH-quinone oxidoreductase subunit H (408 aa).

9 helical membrane passes run 18 to 38 (LAKA…AILI), 84 to 104 (PIYL…FSVI), 124 to 144 (LPVA…GIVL), 165 to 185 (VVSY…YAGT), 198 to 218 (TWFV…MVGE), 261 to 281 (SALA…FNLI), 288 to 308 (WWPL…YFWL), 321 to 341 (MALG…VVAI), and 353 to 373 (WAAW…WGLA). The tract at residues 381–408 (VQPPPPQSTGAYPVPPLPSVGTKETADA) is disordered. Residues 382-398 (QPPPPQSTGAYPVPPLP) are compositionally biased toward pro residues.

This sequence belongs to the complex I subunit 1 family. As to quaternary structure, NDH-1 is composed of 14 different subunits. Subunits NuoA, H, J, K, L, M, N constitute the membrane sector of the complex.

It is found in the cell membrane. The catalysed reaction is a quinone + NADH + 5 H(+)(in) = a quinol + NAD(+) + 4 H(+)(out). In terms of biological role, NDH-1 shuttles electrons from NADH, via FMN and iron-sulfur (Fe-S) centers, to quinones in the respiratory chain. The immediate electron acceptor for the enzyme in this species is believed to be menaquinone. Couples the redox reaction to proton translocation (for every two electrons transferred, four hydrogen ions are translocated across the cytoplasmic membrane), and thus conserves the redox energy in a proton gradient. This subunit may bind ubiquinone. This Mycolicibacterium smegmatis (strain ATCC 700084 / mc(2)155) (Mycobacterium smegmatis) protein is NADH-quinone oxidoreductase subunit H.